An 88-amino-acid chain; its full sequence is Apolipoprotein C-I (88 aa).

The N-terminal stretch at 1–26 (MRLFLSLPVLVVVLAMVWEGPAPTQA) is a signal peptide.

This sequence belongs to the apolipoprotein C1 family.

Its subcellular location is the secreted. In terms of biological role, inhibitor of lipoprotein binding to the low density lipoprotein (LDL) receptor, LDL receptor-related protein, and very low density lipoprotein (VLDL) receptor. Associates with high density lipoproteins (HDL) and the triacylglycerol-rich lipoproteins in the plasma and makes up about 10% of the protein of the VLDL and 2% of that of HDL. Appears to interfere directly with fatty acid uptake and is also the major plasma inhibitor of cholesteryl ester transfer protein (CETP). Binds free fatty acids and reduces their intracellular esterification. Modulates the interaction of APOE with beta-migrating VLDL and inhibits binding of beta-VLDL to the LDL receptor-related protein. The polypeptide is Apolipoprotein C-I (APOC1) (Neomonachus schauinslandi (Hawaiian monk seal)).